Here is a 135-residue protein sequence, read N- to C-terminus: MISIGTDLVHISAFAEQLAQPGSSFMEVFSAGERRKANERQASRYAEHLAGRWAAKESFIKAWSQAIYGQPPVIAEEAVVWRDIEVRADAWGRVAIELAPELAAVVRESIGEFSSSLSISHDGDYAVATCVLTIQ.

The Mg(2+) site is built by D7 and E57.

It belongs to the P-Pant transferase superfamily. AcpS family. Mg(2+) serves as cofactor.

The protein resides in the cytoplasm. It catalyses the reaction apo-[ACP] + CoA = holo-[ACP] + adenosine 3',5'-bisphosphate + H(+). In terms of biological role, transfers the 4'-phosphopantetheine moiety from coenzyme A to a Ser of acyl-carrier-protein. The polypeptide is Holo-[acyl-carrier-protein] synthase (Corynebacterium glutamicum (strain ATCC 13032 / DSM 20300 / JCM 1318 / BCRC 11384 / CCUG 27702 / LMG 3730 / NBRC 12168 / NCIMB 10025 / NRRL B-2784 / 534)).